The primary structure comprises 412 residues: Peptidase T (412 aa).

Residue histidine 84 coordinates Zn(2+). Aspartate 86 is an active-site residue. Aspartate 146 serves as a coordination point for Zn(2+). The active-site Proton acceptor is the glutamate 179. Glutamate 180, aspartate 202, and histidine 385 together coordinate Zn(2+).

The protein belongs to the peptidase M20B family. It depends on Zn(2+) as a cofactor.

It is found in the cytoplasm. It carries out the reaction Release of the N-terminal residue from a tripeptide.. Its function is as follows. Cleaves the N-terminal amino acid of tripeptides. The polypeptide is Peptidase T (Haemophilus influenzae (strain PittEE)).